A 324-amino-acid chain; its full sequence is Mevalonate-3-kinase (324 aa).

Position 19 (Leu-19) interacts with substrate. 109–112 (SGSS) is an ATP binding site. Substrate contacts are provided by Glu-145 and Arg-149. Residues Arg-190 and Ser-193 each contribute to the ATP site.

The protein belongs to the GHMP kinase family. As to quaternary structure, homodimer.

The enzyme catalyses (R)-mevalonate + ATP = (R)-3-phosphomevalonate + ADP + H(+). The protein operates within isoprenoid biosynthesis; isopentenyl diphosphate biosynthesis via mevalonate pathway. Its function is as follows. Catalyzes the phosphorylation of mevalonate (MVA) to yield mevalonate-3-phosphate. Functions in an alternative mevalonate pathway, which passes through mevalonate 3-phosphate rather than mevalonate 5-phosphate. Also able to catalyze the formation of isobutene via the conversion of 3-hydroxyisovalerate (3-HIV) to an unstable 3-phosphate intermediate that undergoes a spontaneous decarboxylation. In Picrophilus torridus (strain ATCC 700027 / DSM 9790 / JCM 10055 / NBRC 100828 / KAW 2/3), this protein is Mevalonate-3-kinase.